The following is a 210-amino-acid chain: MVETVHPKNDRLVWIDLEMTGLELDRHVIVEVAALITDADLNIIGEGVDLVVHATPEQLAEMDDFVTTMHTSSGLLEEIKASTVSLQEAEDAVLALIAQHCDPEHPAPLAGNSIATDRSFIRAQMPRLDKALHYRMVDVSSLKELSRRWAPRVYFNQPDKGMAHRALADIVESIRELDYYRRAWLISDPTTEDAEDAKANATASYQQFLQ.

Residues 12-177 enclose the Exonuclease domain; that stretch reads LVWIDLEMTG…ADIVESIREL (166 aa). The active site involves Tyr134.

It belongs to the oligoribonuclease family.

Its subcellular location is the cytoplasm. Functionally, 3'-to-5' exoribonuclease specific for small oligoribonucleotides. This is Oligoribonuclease from Corynebacterium diphtheriae (strain ATCC 700971 / NCTC 13129 / Biotype gravis).